The following is a 563-amino-acid chain: DNA polymerase III subunit tau (563 aa).

45 to 52 is an ATP binding site; the sequence is GPRGTGKT. Positions 64, 73, 76, and 79 each coordinate Zn(2+).

Belongs to the DnaX/STICHEL family. In terms of assembly, component of the DNA clamp loading complex consisting of tau(3):delta(1):delta'(1). The DNA polymerase III holoenzyme complex contains at least 10 different subunits organized into 3 functionally essential subassemblies: the Pol III core, the beta sliding clamp processivity factor and the clamp-loading complex. The Pol III core (subunits alpha, epsilon and theta) contains the polymerase and the 3'-5' exonuclease proofreading activities. The polymerase is tethered to the template via the dimeric beta sliding clamp processivity factor. The DNA clamp-loading complex assembles the beta sliding clamp onto the primed template and plays a central role in the organization and communication at the replication fork. Forms a complex with replicative DNA helicase DnaB (shown with G.stearothermophilus DnaB) tau(3):DnaB(6); a single ATP hydrolysis even is sufficient for complex formation. Colocalizes with DNA helicases PriA, RecQ and RecS.

The protein resides in the cytoplasm. Its subcellular location is the nucleoid. It catalyses the reaction DNA(n) + a 2'-deoxyribonucleoside 5'-triphosphate = DNA(n+1) + diphosphate. In terms of biological role, part of the beta sliding clamp loading complex, which hydrolyzes ATP to load the beta clamp onto primed DNA to form the DNA replication pre-initiation complex. DNA polymerase III is a complex, multichain enzyme responsible for most of the replicative DNA synthesis in bacteria. The polypeptide is DNA polymerase III subunit tau (Bacillus subtilis (strain 168)).